The sequence spans 354 residues: tRNA N6-adenosine threonylcarbamoyltransferase (354 aa).

The Fe cation site is built by His111 and His115. Residues 134-138 (LVSGG), Asp167, Gly180, and Asn279 each bind substrate. Residue Asp319 coordinates Fe cation.

Belongs to the KAE1 / TsaD family. The cofactor is Fe(2+).

It localises to the cytoplasm. It carries out the reaction L-threonylcarbamoyladenylate + adenosine(37) in tRNA = N(6)-L-threonylcarbamoyladenosine(37) in tRNA + AMP + H(+). In terms of biological role, required for the formation of a threonylcarbamoyl group on adenosine at position 37 (t(6)A37) in tRNAs that read codons beginning with adenine. Is involved in the transfer of the threonylcarbamoyl moiety of threonylcarbamoyl-AMP (TC-AMP) to the N6 group of A37, together with TsaE and TsaB. TsaD likely plays a direct catalytic role in this reaction. In Neisseria meningitidis serogroup C / serotype 2a (strain ATCC 700532 / DSM 15464 / FAM18), this protein is tRNA N6-adenosine threonylcarbamoyltransferase.